A 432-amino-acid chain; its full sequence is Tyrosine--tRNA ligase (432 aa).

Residue tyrosine 35 coordinates L-tyrosine. A 'HIGH' region motif is present at residues 40-49 (PTAGSLHVGH). L-tyrosine-binding residues include tyrosine 175 and glutamine 179. The short motif at 239–243 (KFGKT) is the 'KMSKS' region element. Position 242 (lysine 242) interacts with ATP. Positions 365–422 (PPLVDLFASTGLVPSKSAARRTIQEGGAYLNNAKVTDIEARVSEADLLHGRYLVLRRG) constitute an S4 RNA-binding domain.

It belongs to the class-I aminoacyl-tRNA synthetase family. TyrS type 1 subfamily. As to quaternary structure, homodimer.

The protein localises to the cytoplasm. The enzyme catalyses tRNA(Tyr) + L-tyrosine + ATP = L-tyrosyl-tRNA(Tyr) + AMP + diphosphate + H(+). Functionally, catalyzes the attachment of tyrosine to tRNA(Tyr) in a two-step reaction: tyrosine is first activated by ATP to form Tyr-AMP and then transferred to the acceptor end of tRNA(Tyr). The chain is Tyrosine--tRNA ligase from Thermobifida fusca (strain YX).